The following is a 360-amino-acid chain: MTELDTLKSQLMSEIAAAADEPAIEAVRVSALGKKGSVSELLKTLGSMTPEERQTRGAAINQLKTEITDLIGERKNALKDAAIAARLKAETVDVSLPVRQSPTERGRIHPISQIVDEITAIFADMGFSIAEGPDIETDYYNFTALNFPEGHPAREMHDTFFFQPDEKGERKVLRTHTSPVQIRTMESQKPPIRIVIPGKTYRQDSDATHSPMFHQVEGLVIDKKAHVGNLRWVLEEFCKTFFEVDSVVMRFRPSFFPFTEPSFEVDIQCDRSGPIVKFGEGKDWMEILGCGMVHPNVLRAGGLDPDEYQGFAWGMGLDRIAMLKYGMPDLRDFFNADVRWMNHYGFRPLDMPTLFGGLSV.

Glu-260 serves as a coordination point for Mg(2+).

This sequence belongs to the class-II aminoacyl-tRNA synthetase family. Phe-tRNA synthetase alpha subunit type 1 subfamily. In terms of assembly, tetramer of two alpha and two beta subunits. Requires Mg(2+) as cofactor.

The protein localises to the cytoplasm. The enzyme catalyses tRNA(Phe) + L-phenylalanine + ATP = L-phenylalanyl-tRNA(Phe) + AMP + diphosphate + H(+). The chain is Phenylalanine--tRNA ligase alpha subunit from Agrobacterium fabrum (strain C58 / ATCC 33970) (Agrobacterium tumefaciens (strain C58)).